The sequence spans 141 residues: Large ribosomal subunit protein uL11 (141 aa).

It belongs to the universal ribosomal protein uL11 family. As to quaternary structure, part of the ribosomal stalk of the 50S ribosomal subunit. Interacts with L10 and the large rRNA to form the base of the stalk. L10 forms an elongated spine to which L12 dimers bind in a sequential fashion forming a multimeric L10(L12)X complex. In terms of processing, one or more lysine residues are methylated.

Its function is as follows. Forms part of the ribosomal stalk which helps the ribosome interact with GTP-bound translation factors. The sequence is that of Large ribosomal subunit protein uL11 from Thermotoga sp. (strain RQ2).